A 506-amino-acid chain; its full sequence is Cobyric acid synthase (506 aa).

The GATase cobBQ-type domain occupies 251 to 448 (DITIAIVQLP…LHGLFDSDAF (198 aa)). The Nucleophile role is filled by Cys-332. The active site involves His-440.

Belongs to the CobB/CobQ family. CobQ subfamily.

The protein operates within cofactor biosynthesis; adenosylcobalamin biosynthesis. Its function is as follows. Catalyzes amidations at positions B, D, E, and G on adenosylcobyrinic A,C-diamide. NH(2) groups are provided by glutamine, and one molecule of ATP is hydrogenolyzed for each amidation. In Salmonella choleraesuis (strain SC-B67), this protein is Cobyric acid synthase.